The primary structure comprises 664 residues: Alcohol oxidase (664 aa).

8-39 (DIIVVGGGSTGCCIAGRLANLDDQNLTVALIE) provides a ligand contact to FAD. The Proton acceptor role is filled by H568. Positions 662–664 (ARF) match the Microbody targeting signal motif.

Belongs to the GMC oxidoreductase family. As to quaternary structure, homooctamer. The cofactor is FAD.

Its subcellular location is the peroxisome matrix. It carries out the reaction a primary alcohol + O2 = an aldehyde + H2O2. It participates in energy metabolism; methane degradation. Catalyzes the oxidation of methanol to formaldehyde and hydrogen peroxide, the first step in the methanol utilization pathway of methylotrophic yeasts. The protein is Alcohol oxidase (MOX) of Pichia angusta (Yeast).